Here is a 152-residue protein sequence, read N- to C-terminus: MRCPYCQHPDSDVIDTRKLHNGETIRRRRKCEACGRRFTTYERVEMVSITVVKKNGEREPYDREKLMRGVRTACYRRPVPAQALEALANDIEAELMARDEPEVPSSLIGDMVMRRLRAIDDVAYIRFASVYRSFADIGKLREAVDELLGQGH.

Residues 3–34 fold into a zinc finger; that stretch reads CPYCQHPDSDVIDTRKLHNGETIRRRRKCEAC. An ATP-cone domain is found at 49 to 139; that stretch reads ITVVKKNGER…VYRSFADIGK (91 aa).

Belongs to the NrdR family. It depends on Zn(2+) as a cofactor.

Negatively regulates transcription of bacterial ribonucleotide reductase nrd genes and operons by binding to NrdR-boxes. The polypeptide is Transcriptional repressor NrdR (Roseiflexus sp. (strain RS-1)).